A 208-amino-acid chain; its full sequence is Interferon epsilon (208 aa).

Positions 1 to 21 are cleaved as a signal peptide; it reads MIIKHFFGTVLVLLASTTIFS. The cysteines at positions 53 and 163 are disulfide-linked. Asparagine 95 and asparagine 104 each carry an N-linked (GlcNAc...) asparagine glycan.

The protein belongs to the alpha/beta interferon family. In terms of tissue distribution, endometrium-specific.

It localises to the secreted. Type I interferon required for maintaining basal levels of IFN-regulated genes, including 2'-5'-oligoadenylate synthetase, IRF7 and ISG15, in the female reproductive tract. Directly mediates protection against viral and bacterial genital infections. The polypeptide is Interferon epsilon (IFNE) (Homo sapiens (Human)).